The primary structure comprises 457 residues: Acetylcholine receptor subunit alpha (457 aa).

The N-terminal stretch at 1 to 20 (MELSTVLLLLGLCSAGLVLG) is a signal peptide. Topologically, residues 21-230 (SEHETRLVAK…ITYHFVMQRL (210 aa)) are extracellular. Intrachain disulfides connect cysteine 148–cysteine 162 and cysteine 212–cysteine 213. The N-linked (GlcNAc...) asparagine glycan is linked to asparagine 161. The next 3 membrane-spanning stretches (helical) occupy residues 231–255 (PLYF…VFYL), 263–281 (MTLS…LVIV), and 297–316 (YMLF…VIVI). Residues 317–428 (NTHHRSPSTH…WKYVAMVMDH (112 aa)) lie on the Cytoplasmic side of the membrane. Residues 429–447 (ILLGVFMLVCLIGTLAVFA) form a helical membrane-spanning segment.

Belongs to the ligand-gated ion channel (TC 1.A.9) family. Acetylcholine receptor (TC 1.A.9.1) subfamily. Alpha-1/CHRNA1 sub-subfamily. As to quaternary structure, one of the alpha chains that assemble within the acetylcholine receptor, a pentamer of two alpha chains, a beta, a delta, and a gamma (in immature muscle) or epsilon (in mature muscle) chains. The muscle heteropentamer composed of alpha-1, beta-1, delta, epsilon subunits interacts with the alpha-conotoxin ImII.

Its subcellular location is the postsynaptic cell membrane. The protein resides in the cell membrane. The enzyme catalyses K(+)(in) = K(+)(out). The catalysed reaction is Na(+)(in) = Na(+)(out). In terms of biological role, upon acetylcholine binding, the AChR responds by an extensive change in conformation that affects all subunits and leads to opening of an ion-conducting channel across the plasma membrane. This Mus musculus (Mouse) protein is Acetylcholine receptor subunit alpha (Chrna1).